Consider the following 363-residue polypeptide: Cytochrome b (363 aa).

The next 4 helical transmembrane spans lie at 24–44 (VGFS…CLAW), 68–90 (FVIR…IHIF), 105–125 (VWFI…IGYV), and 171–191 (LHVL…LHLF). 2 residues coordinate heme b: His-74 and His-88. Heme b-binding residues include His-175 and His-189. His-194 serves as a coordination point for a ubiquinone. The next 4 helical transmembrane spans lie at 219–239 (FYLR…YVIF), 287–307 (FLMV…ILWF), 321–341 (LILF…VLAY), and 342–362 (PIWM…VCRL).

Belongs to the cytochrome b family. In terms of assembly, the main subunits of complex b-c1 are: cytochrome b, cytochrome c1 and the Rieske protein. The cofactor is heme b.

It localises to the mitochondrion inner membrane. Its function is as follows. Component of the ubiquinol-cytochrome c reductase complex (complex III or cytochrome b-c1 complex) that is part of the mitochondrial respiratory chain. The b-c1 complex mediates electron transfer from ubiquinol to cytochrome c. Contributes to the generation of a proton gradient across the mitochondrial membrane that is then used for ATP synthesis. This Trypanosoma brucei brucei protein is Cytochrome b (MT-CYB).